The primary structure comprises 226 residues: Phosphoribosylformylglycinamidine synthase subunit PurQ (226 aa).

The 225-residue stretch at K2 to N226 folds into the Glutamine amidotransferase type-1 domain. Catalysis depends on C86, which acts as the Nucleophile. Residues H195 and E197 contribute to the active site.

As to quaternary structure, part of the FGAM synthase complex composed of 1 PurL, 1 PurQ and 2 PurS subunits.

The protein resides in the cytoplasm. The catalysed reaction is N(2)-formyl-N(1)-(5-phospho-beta-D-ribosyl)glycinamide + L-glutamine + ATP + H2O = 2-formamido-N(1)-(5-O-phospho-beta-D-ribosyl)acetamidine + L-glutamate + ADP + phosphate + H(+). It catalyses the reaction L-glutamine + H2O = L-glutamate + NH4(+). The protein operates within purine metabolism; IMP biosynthesis via de novo pathway; 5-amino-1-(5-phospho-D-ribosyl)imidazole from N(2)-formyl-N(1)-(5-phospho-D-ribosyl)glycinamide: step 1/2. Its function is as follows. Part of the phosphoribosylformylglycinamidine synthase complex involved in the purines biosynthetic pathway. Catalyzes the ATP-dependent conversion of formylglycinamide ribonucleotide (FGAR) and glutamine to yield formylglycinamidine ribonucleotide (FGAM) and glutamate. The FGAM synthase complex is composed of three subunits. PurQ produces an ammonia molecule by converting glutamine to glutamate. PurL transfers the ammonia molecule to FGAR to form FGAM in an ATP-dependent manner. PurS interacts with PurQ and PurL and is thought to assist in the transfer of the ammonia molecule from PurQ to PurL. The protein is Phosphoribosylformylglycinamidine synthase subunit PurQ of Lactococcus lactis subsp. cremoris (Streptococcus cremoris).